Here is a 321-residue protein sequence, read N- to C-terminus: Corticotropin-releasing factor-binding protein (321 aa).

The signal sequence occupies residues 1-21; it reads MTPASRPDWCLILLFLAVLRG. Intrachain disulfides connect cysteine 59/cysteine 80, cysteine 103/cysteine 140, cysteine 182/cysteine 204, cysteine 237/cysteine 264, and cysteine 277/cysteine 317. An N-linked (GlcNAc...) asparagine glycan is attached at asparagine 203.

Belongs to the CRF-binding protein family.

The protein resides in the secreted. In terms of biological role, binds CRF and inactivates it. May prevent inappropriate pituitary-adrenal stimulation in pregnancy. This chain is Corticotropin-releasing factor-binding protein (crhbp), found in Xenopus laevis (African clawed frog).